Reading from the N-terminus, the 514-residue chain is Calcium-binding mitochondrial carrier protein SCaMC-2 (514 aa).

The Mitochondrial intermembrane segment spans residues 1–234 (MARPRSLVSP…EKQTGMWWRH (234 aa)). EF-hand domains are found at residues 56-91 (EHER…LGVH), 92-122 (RTEL…HYLR), 123-158 (DHEK…LGVN), and 159-194 (ISEQ…HSAE). Aspartate 69, asparagine 71, aspartate 73, aspartate 80, aspartate 105, aspartate 107, aspartate 109, glutamine 111, and glutamate 116 together coordinate Ca(2+). Solcar repeat units lie at residues 229–315 (GMWW…IKRI), 323–408 (LGIH…LKNA), and 420–508 (PGVF…LKLT). Residues 235–252 (LVAGGGAGAVSRTCTAPL) traverse the membrane as a helical segment. The Mitochondrial matrix segment spans residues 253 to 289 (DRLKVLMQVHASRSNNMSILGGFTHMIREGGFRSLWR). A helical transmembrane segment spans residues 290 to 309 (GNGINVIKIAPESAIKFMAY). The Mitochondrial intermembrane portion of the chain corresponds to 310–332 (EQIKRIIGSNQETLGIHERFVAG). Residues 333-346 (SLAGVIAQSSIYPM) traverse the membrane as a helical segment. Over 347–382 (EVLKTRMALRKTGQYQGVLDCGKKILLQEGLSAFYK) the chain is Mitochondrial matrix. A helical transmembrane segment spans residues 383–402 (GYVPNMLGIIPYAGIDLAVY). Topologically, residues 403–425 (ETLKNAWLQRYATSSADPGVFVL) are mitochondrial intermembrane. A helical transmembrane segment spans residues 426-443 (LACGTVSSTCGQLASYPL). At 444–482 (ALVRTRMQAEASVEGAPQMTMSKLFKHIVKTEGAFGLYR) the chain is on the mitochondrial matrix side. A helical transmembrane segment spans residues 483–502 (GLAPNFMKVIPAVSISYVVY). Topologically, residues 503–514 (ENLKLTLGVQSR) are mitochondrial intermembrane.

It belongs to the mitochondrial carrier (TC 2.A.29) family.

The protein localises to the mitochondrion inner membrane. Calcium-dependent mitochondrial solute carrier. This is Calcium-binding mitochondrial carrier protein SCaMC-2 (slc25a25) from Xenopus laevis (African clawed frog).